Consider the following 185-residue polypeptide: Homeobox expressed in ES cells 1 (185 aa).

The homeobox DNA-binding region spans 108-167 (GRRPRTAFTQNQIEVLENVFRVNCYPGIDIREDLAQKLNLEEDRIQIWFQNRRAKLKRSH).

It belongs to the ANF homeobox family. As to quaternary structure, can form heterodimers with PROP1 in binding to DNA. Interacts with TLE1.

The protein resides in the nucleus. Required for the normal development of the forebrain, eyes and other anterior structures such as the olfactory placodes and pituitary gland. Possible transcriptional repressor. Binds to the palindromic PIII sequence, 5'-AGCTTGAGTCTAATTGAATTAACTGTAC-3'. HESX1 and PROP1 bind as heterodimers on this palindromic site, and, in vitro, HESX1 can antagonize PROP1 activation. The protein is Homeobox expressed in ES cells 1 (HESX1) of Pan paniscus (Pygmy chimpanzee).